Here is a 145-residue protein sequence, read N- to C-terminus: UI (145 aa).

The signal sequence occupies residues 1 to 22 (MKPVPLVLLITSVLLTTHIPLS). A Valine amide modification is found at Val-143.

Belongs to the sauvagine/corticotropin-releasing factor/urotensin I family.

The protein resides in the secreted. Its function is as follows. Urotensin is found in the teleost caudal neurosecretory system. It has a suggested role in osmoregulation and as a corticotropin-releasing factor. The non-hormonal portion of this precursor may be a urotensin binding protein, urophysin. The protein is UI of Carassius auratus (Goldfish).